The following is a 276-amino-acid chain: Diaminopimelate epimerase (276 aa).

Substrate is bound by residues Asn-13, Gln-46, and Asn-66. Cys-75 acts as the Proton donor in catalysis. Residues 76-77 (GN), Asn-159, Asn-192, and 210-211 (ER) each bind substrate. Catalysis depends on Cys-219, which acts as the Proton acceptor. 220 to 221 (GT) serves as a coordination point for substrate.

The protein belongs to the diaminopimelate epimerase family. In terms of assembly, homodimer.

Its subcellular location is the cytoplasm. The catalysed reaction is (2S,6S)-2,6-diaminopimelate = meso-2,6-diaminopimelate. The protein operates within amino-acid biosynthesis; L-lysine biosynthesis via DAP pathway; DL-2,6-diaminopimelate from LL-2,6-diaminopimelate: step 1/1. In terms of biological role, catalyzes the stereoinversion of LL-2,6-diaminopimelate (L,L-DAP) to meso-diaminopimelate (meso-DAP), a precursor of L-lysine and an essential component of the bacterial peptidoglycan. The polypeptide is Diaminopimelate epimerase (Pseudomonas entomophila (strain L48)).